The following is a 262-amino-acid chain: Global transcriptional regulator CodY (262 aa).

The segment at 1-159 (MAHLLEKTRK…ASTVVGIQLL (159 aa)) is GAF domain. Positions 207–226 (ASVIADRIGITRSVIVNALR) form a DNA-binding region, H-T-H motif.

This sequence belongs to the CodY family.

It localises to the cytoplasm. Functionally, DNA-binding global transcriptional regulator which is involved in the adaptive response to starvation and acts by directly or indirectly controlling the expression of numerous genes in response to nutrient availability. During rapid exponential growth, CodY is highly active and represses genes whose products allow adaptation to nutrient depletion. This chain is Global transcriptional regulator CodY, found in Streptococcus pneumoniae (strain ATCC BAA-255 / R6).